We begin with the raw amino-acid sequence, 365 residues long: Chorismate synthase (365 aa).

NADP(+)-binding residues include arginine 48 and arginine 54. FMN is bound by residues 131–133 (RSS), 243–244 (NA), glycine 288, 303–307 (KPTSS), and arginine 329.

The protein belongs to the chorismate synthase family. Homotetramer. FMNH2 serves as cofactor.

The enzyme catalyses 5-O-(1-carboxyvinyl)-3-phosphoshikimate = chorismate + phosphate. Its pathway is metabolic intermediate biosynthesis; chorismate biosynthesis; chorismate from D-erythrose 4-phosphate and phosphoenolpyruvate: step 7/7. Its function is as follows. Catalyzes the anti-1,4-elimination of the C-3 phosphate and the C-6 proR hydrogen from 5-enolpyruvylshikimate-3-phosphate (EPSP) to yield chorismate, which is the branch point compound that serves as the starting substrate for the three terminal pathways of aromatic amino acid biosynthesis. This reaction introduces a second double bond into the aromatic ring system. The polypeptide is Chorismate synthase (Rhizobium etli (strain ATCC 51251 / DSM 11541 / JCM 21823 / NBRC 15573 / CFN 42)).